Reading from the N-terminus, the 217-residue chain is MLO-like protein (217 aa).

3 consecutive transmembrane segments (helical) span residues 35–55, 59–79, and 119–139; these read FKVV…FLLS, GWVA…VVGT, and LVLF…AFFI.

It belongs to the MLO family.

It localises to the membrane. Its function is as follows. May be involved in modulation of pathogen defense and leaf cell death. This chain is MLO-like protein, found in Linum usitatissimum (Flax).